Consider the following 216-residue polypeptide: ATP synthase subunit C lysine N-methyltransferase (216 aa).

Methionine 1 carries the post-translational modification N-acetylmethionine. Positions 1–12 are enriched in basic and acidic residues; that stretch reads MERGETPEEERQ. Residues 1-25 are disordered; sequence MERGETPEEERQSGCVLPTSPESDS. The chain crosses the membrane as a helical span at residues 31 to 50; the sequence is WGFLITGVIGGALVTVYAVT. The required for mitochondrial location stretch occupies residues 51–85; that stretch reads TPFIAPALRKVCLPFVPATSRQVENVVKMLQHRRG.

Belongs to the ANT/ATPSC lysine N-methyltransferase family.

The protein localises to the mitochondrion membrane. It catalyses the reaction L-lysyl-[protein] + 3 S-adenosyl-L-methionine = N(6),N(6),N(6)-trimethyl-L-lysyl-[protein] + 3 S-adenosyl-L-homocysteine + 3 H(+). In terms of biological role, mitochondrial protein-lysine N-methyltransferase that trimethylates ATP synthase subunit C, ATP5MC1 and ATP5MC2. Trimethylation is required for proper incorporation of the C subunit into the ATP synthase complex and mitochondrial respiration. Promotes chronic pain. Involved in persistent inflammatory and neuropathic pain: methyltransferase activity in the mitochondria of sensory neurons promotes chronic pain via a pathway that depends on the production of reactive oxygen species (ROS) and on the engagement of spinal cord microglia. The chain is ATP synthase subunit C lysine N-methyltransferase (Atpsckmt) from Rattus norvegicus (Rat).